The following is a 510-amino-acid chain: Inositol-3-phosphate synthase (510 aa).

Gly70, Gly71, Asn72, Asn73, Asp143, Ile180, Gln190, Arg193, Thr230, Ala231, Asn232, Thr233, Gly281, Ser282, Asp306, Ser309, Asn340, Asn341, Asp342, Lys355, Gly393, Asp394, Asp422, and Ser423 together coordinate NAD(+).

This sequence belongs to the myo-inositol 1-phosphate synthase family. NAD(+) serves as cofactor.

It localises to the cytoplasm. The protein localises to the cytosol. It is found in the nucleus. The catalysed reaction is D-glucose 6-phosphate = 1D-myo-inositol 3-phosphate. It functions in the pathway polyol metabolism; myo-inositol biosynthesis; myo-inositol from D-glucose 6-phosphate: step 1/2. Its function is as follows. Key enzyme in myo-inositol biosynthesis pathway that catalyzes the conversion of glucose 6-phosphate to 1-myo-inositol 1-phosphate in a NAD-dependent manner. The protein is Inositol-3-phosphate synthase (TUR1) of Spirodela polyrhiza (Giant duckweed).